The following is a 268-amino-acid chain: Tryptophan synthase alpha chain (268 aa).

Catalysis depends on proton acceptor residues Glu-49 and Asp-60.

The protein belongs to the TrpA family. As to quaternary structure, tetramer of two alpha and two beta chains.

The catalysed reaction is (1S,2R)-1-C-(indol-3-yl)glycerol 3-phosphate + L-serine = D-glyceraldehyde 3-phosphate + L-tryptophan + H2O. The protein operates within amino-acid biosynthesis; L-tryptophan biosynthesis; L-tryptophan from chorismate: step 5/5. The alpha subunit is responsible for the aldol cleavage of indoleglycerol phosphate to indole and glyceraldehyde 3-phosphate. The chain is Tryptophan synthase alpha chain from Dechloromonas aromatica (strain RCB).